The sequence spans 1336 residues: Glutamate receptor ionotropic, NMDA 2D (1336 aa).

Residues 1 to 27 (MRGAGGPRGPRGPAKMLLLLALACASP) form the signal peptide. Residues 28–582 (FPEEAPGPGG…SPSAFLEPYS (555 aa)) are Extracellular-facing. Residue N92 is glycosylated (N-linked (GlcNAc...) asparagine). C104 and C348 are oxidised to a cystine. N-linked (GlcNAc...) asparagine glycosylation is found at N352, N366, N384, and N467. 2 cysteine pairs are disulfide-bonded: C455–C483 and C462–C484. Positions 539, 541, and 546 each coordinate L-glutamate. Residue N569 is glycosylated (N-linked (GlcNAc...) asparagine). The helical transmembrane segment at 583–604 (PAVWVMMFVMCLTVVAVTVFIF) threads the bilayer. The Cytoplasmic segment spans residues 605–629 (EYLSPVGYNRSLATGKRPGGSTFTI). The segment at residues 630 to 641 (GKSIWLLWALVF) is an intramembrane region (discontinuously helical). The interval 631–650 (KSIWLLWALVFNNSVPVENP) is pore-forming. Over 642 to 653 (NNSVPVENPRGT) the chain is Cytoplasmic. A helical membrane pass occupies residues 654–674 (TSKIMVLVWAFFAVIFLASYT). The Extracellular portion of the chain corresponds to 675–843 (ANLAAFMIQE…EVMSSKLDID (169 aa)). Residues S717, T718, and D759 each contribute to the L-glutamate site. C773 and C828 are oxidised to a cystine. Residues 844–867 (NMAGVFYMLLVAMGLSLLVFAWEH) form a helical membrane-spanning segment. Residues 868–1336 (LVYWRLRHCL…AHFSSLESEV (469 aa)) are Cytoplasmic-facing. 3 disordered regions span residues 900–934 (EAAP…PFVP), 981–1123 (RAAP…SLGG), and 1225–1336 (RCGC…ESEV). Over residues 902 to 932 (APPPAKPPPPPQPLPSPAYPAPRPAPGPAPF) the composition is skewed to pro residues. The span at 981–991 (RAAPRGAAGRP) shows a compositional bias: low complexity. The segment covering 992–1006 (LSPPAAQPPQKPPPS) has biased composition (pro residues). Positions 1035–1044 (AAAATAVGPP) are enriched in low complexity. The span at 1074–1089 (PGAGGAGGTGGAGGGA) shows a compositional bias: gly residues. Positions 1091-1104 (AAPPPCRAAPPPCP) are enriched in pro residues. Residues 1225–1240 (RCGCPRSHPHRPRASH) are compositionally biased toward basic residues. R1316 is subject to Omega-N-methylarginine. Position 1326 is a phosphoserine (S1326). The PDZ-binding signature appears at 1334–1336 (SEV).

The protein belongs to the glutamate-gated ion channel (TC 1.A.10.1) family. NR2D/GRIN2D subfamily. In terms of assembly, heterotetramer. Forms heterotetrameric channels composed of two GluN1/zeta subunits (GRIN1), and two identical GluN2/epsilon subunits (GRIN2A, GRIN2B, GRIN2C or GRIN2D) or GluN3 subunits (GRIN3A or GRIN3B) (in vitro). In vivo, the subunit composition may depend on the expression levels of the different subunits. Interacts with PDZ domains of PATJ and DLG4.

Its subcellular location is the cell membrane. The protein resides in the postsynaptic cell membrane. The enzyme catalyses Ca(2+)(in) = Ca(2+)(out). It carries out the reaction Na(+)(in) = Na(+)(out). The catalysed reaction is K(+)(in) = K(+)(out). In terms of biological role, component of N-methyl-D-aspartate (NMDA) receptors (NMDARs) that function as heterotetrameric, ligand-gated cation channels with high calcium permeability and voltage-dependent block by Mg(2+). Participates in synaptic plasticity for learning and memory formation. Channel activation requires binding of the neurotransmitter L-glutamate to the GluN2 subunit, glycine or D-serine binding to the GluN1 subunit, plus membrane depolarization to eliminate channel inhibition by Mg(2+). NMDARs mediate simultaneously the potasium efflux and the influx of calcium and sodium. Each GluN2 subunit confers differential attributes to channel properties, including activation, deactivation and desensitization kinetics, pH sensitivity, Ca2(+) permeability, and binding to allosteric modulators. The polypeptide is Glutamate receptor ionotropic, NMDA 2D (Homo sapiens (Human)).